We begin with the raw amino-acid sequence, 75 residues long: MPIIGVPRCLEKPFCAPAKFPFSVKKNIRILDLDPRTEAYCLSLNSVCSKRLPCKKYFYLLNSYNIKRVLGVVYC.

This sequence belongs to the UPF0377 family.

This chain is Putative UPF0377 protein YJL222W-A, found in Saccharomyces cerevisiae (strain ATCC 204508 / S288c) (Baker's yeast).